The chain runs to 174 residues: uncharacterized protein (174 aa).

The protein belongs to the mimivirus L39/R874 family.

This is an uncharacterized protein from Acanthamoeba polyphaga (Amoeba).